The sequence spans 454 residues: tRNA modification GTPase MnmE (454 aa).

The (6S)-5-formyl-5,6,7,8-tetrahydrofolate site is built by R23, E80, and K120. The TrmE-type G domain maps to 216–377 (GMKVVIAGRP…LRNHLKQSMG (162 aa)). Residue N226 participates in K(+) binding. GTP is bound by residues 226–231 (NAGKSS), 245–251 (TDIAGTT), 270–273 (DTAG), 335–338 (NKAD), and 358–360 (SAR). A Mg(2+)-binding site is contributed by S230. K(+) contacts are provided by T245, I247, and T250. T251 provides a ligand contact to Mg(2+). K454 provides a ligand contact to (6S)-5-formyl-5,6,7,8-tetrahydrofolate.

The protein belongs to the TRAFAC class TrmE-Era-EngA-EngB-Septin-like GTPase superfamily. TrmE GTPase family. Homodimer. Heterotetramer of two MnmE and two MnmG subunits. The cofactor is K(+).

The protein resides in the cytoplasm. In terms of biological role, exhibits a very high intrinsic GTPase hydrolysis rate. Involved in the addition of a carboxymethylaminomethyl (cmnm) group at the wobble position (U34) of certain tRNAs, forming tRNA-cmnm(5)s(2)U34. In Escherichia coli O17:K52:H18 (strain UMN026 / ExPEC), this protein is tRNA modification GTPase MnmE.